The following is a 234-amino-acid chain: UPF0173 metal-dependent hydrolase RL2074 (234 aa).

The protein belongs to the UPF0173 family.

This is UPF0173 metal-dependent hydrolase RL2074 from Rhizobium johnstonii (strain DSM 114642 / LMG 32736 / 3841) (Rhizobium leguminosarum bv. viciae).